The primary structure comprises 1914 residues: Zinc finger protein Rlf (1914 aa).

Ser41 carries the phosphoserine modification. Basic and acidic residues predominate over residues 521-540; the sequence is KQYRRRDLTDQHKEKRDKKP. The tract at residues 521–541 is disordered; that stretch reads KQYRRRDLTDQHKEKRDKKPI. A C2H2-type 1 zinc finger spans residues 582-604; the sequence is YTCPVCIKKFKRKEMFVPHVMEH. Lys622 is covalently cross-linked (Glycyl lysine isopeptide (Lys-Gly) (interchain with G-Cter in SUMO2)). A phosphoserine mark is found at Ser632 and Ser634. 5 C2H2-type zinc fingers span residues 671 to 696, 714 to 736, 742 to 766, 771 to 795, and 801 to 825; these read YPCPGTDCSRVFKQFKYLSVHLKAEH, EKCTYCRRHFMSAFHLREHEQVH, YMCVSIDCYARFGSVNELLNHKQKH, YKCELNGCNIVFSDLGQLYHHEAQH, and YTCNFLGCKKFYYSKIEYQNHLSMH. Lys839 is covalently cross-linked (Glycyl lysine isopeptide (Lys-Gly) (interchain with G-Cter in SUMO2)). The tract at residues 882–907 is disordered; sequence TETAENLKENSDSNSSDQLSHSSSAS. Residues 893–907 show a composition bias toward low complexity; sequence DSNSSDQLSHSSSAS. A C2H2-type 7 zinc finger spans residues 954–979; that stretch reads FTCGFDGCGSTYKNARGMQKHLRKVH. A disordered region spans residues 993 to 1028; it reads LFPSLGNEHNQTTEKLDAEPKPCSDTNSDSPDEGLD. Residues 1003 to 1014 are compositionally biased toward basic and acidic residues; the sequence is QTTEKLDAEPKP. 2 consecutive C2H2-type zinc fingers follow at residues 1127 to 1152 and 1172 to 1195; these read FFCELQGCKYEFVTREALLMHYLKKH and FQCHICQRSFTRKTHLRIHYKNKH. The interval 1231-1290 is disordered; the sequence is LGGDPSSNSEKPHCHPKKDECSSETDLESSCEETESKTSDISSPIGSHREEQEGREGRGS. Residues 1240–1251 are compositionally biased toward basic and acidic residues; that stretch reads EKPHCHPKKDEC. The segment covering 1252–1263 has biased composition (acidic residues); that stretch reads SSETDLESSCEE. Residues 1277–1289 are compositionally biased toward basic and acidic residues; sequence SHREEQEGREGRG. 5 consecutive C2H2-type zinc fingers follow at residues 1310 to 1335, 1362 to 1387, 1407 to 1432, 1444 to 1469, and 1549 to 1574; these read FHCIHKTCNSSFTNLKGLIRHYRTVH, FACKYKECNKRFLCSKALAKHCSDSH, FSCNQPQCPAVFYTFNKLKHHLMEQH, IHCDLNGCGQIFTHRSNYSQHVYYRH, and YPCMVQGCLSVVKLESSIVRHYKRTH. Lys1423 is covalently cross-linked (Glycyl lysine isopeptide (Lys-Gly) (interchain with G-Cter in SUMO2)). Glycyl lysine isopeptide (Lys-Gly) (interchain with G-Cter in SUMO2) cross-links involve residues Lys1599 and Lys1611. Positions 1620 to 1654 are disordered; that stretch reads SERTEHSHSPGDSSAPIQNTDCCHSSERDGGQKGC. The span at 1629–1642 shows a compositional bias: polar residues; sequence PGDSSAPIQNTDCC. Lys1696 participates in a covalent cross-link: Glycyl lysine isopeptide (Lys-Gly) (interchain with G-Cter in SUMO2). The segment at 1725-1757 is disordered; the sequence is ESETRQHSSGQENTVKNPTHVPKENFRKHSQPR. The span at 1731–1741 shows a compositional bias: polar residues; it reads HSSGQENTVKN. Lys1762 is covalently cross-linked (Glycyl lysine isopeptide (Lys-Gly) (interchain with G-Cter in SUMO2)). The tract at residues 1783 to 1807 is disordered; sequence KEDDFDDWEPSEHLTLSNSSQSSND. A compositionally biased stretch (polar residues) spans 1796–1807; that stretch reads LTLSNSSQSSND.

Belongs to the krueppel C2H2-type zinc-finger protein family. Interacts with RIT1 and RIT2. In terms of tissue distribution, widely expressed in fetal and adult tissues.

It is found in the nucleus. Functionally, may be involved in transcriptional regulation. The polypeptide is Zinc finger protein Rlf (RLF) (Homo sapiens (Human)).